A 356-amino-acid chain; its full sequence is Putative ankyrin repeat protein R599 (356 aa).

6 ANK repeats span residues 111-143 (NDDI…FCDN), 152-182 (RLEK…NVNT), 183-213 (HNYE…KLSD), 215-238 (KRKI…ELEV), 239-266 (NFDD…GANI), and 267-298 (NSIP…DINN).

This is Putative ankyrin repeat protein R599 from Acanthamoeba polyphaga (Amoeba).